A 123-amino-acid chain; its full sequence is uncharacterized protein (123 aa).

A run of 2 helical transmembrane segments spans residues Val-53 to Leu-73 and Val-75 to His-95.

The protein resides in the membrane. This is an uncharacterized protein from Saccharomyces cerevisiae (strain ATCC 204508 / S288c) (Baker's yeast).